A 330-amino-acid chain; its full sequence is UDP-glucose 4-epimerase (330 aa).

NAD(+) contacts are provided by residues 11 to 12, 31 to 36, 51 to 52, 73 to 77, Asn-92, Ser-117, Tyr-141, Lys-145, and Phe-169; these read YI, DALYTG, DI, and FAAYS. Substrate-binding residues include Ser-117 and Tyr-141. Residue Tyr-141 is the Proton acceptor of the active site. Residues Asn-170, 189 to 190, 206 to 208, Arg-221, and 282 to 285 contribute to the substrate site; these read HL, TIF, and RGGD.

This sequence belongs to the NAD(P)-dependent epimerase/dehydratase family. Homodimer. NAD(+) is required as a cofactor.

The enzyme catalyses UDP-alpha-D-glucose = UDP-alpha-D-galactose. The protein operates within carbohydrate metabolism; galactose metabolism. Functionally, involved in the metabolism of galactose. Catalyzes the conversion of UDP-galactose (UDP-Gal) to UDP-glucose (UDP-Glc) through a mechanism involving the transient reduction of NAD. It also could be involved in preparation of carbohydrate residues for incorporation into complex polymers, such as exopolysaccharides. This is UDP-glucose 4-epimerase (galE) from Lactobacillus helveticus (Lactobacillus suntoryeus).